The primary structure comprises 418 residues: Tyrosine--tRNA ligase (418 aa).

Tyrosine 34 is an L-tyrosine binding site. The 'HIGH' region signature appears at 39 to 48 (PTADSLHLGH). L-tyrosine is bound by residues tyrosine 169 and glutamine 173. Positions 229 to 233 (KFGKS) match the 'KMSKS' region motif. Lysine 232 lines the ATP pocket. The region spanning 352–418 (LNLVDMLVTA…GKKKYAVLTY (67 aa)) is the S4 RNA-binding domain.

Belongs to the class-I aminoacyl-tRNA synthetase family. TyrS type 1 subfamily. In terms of assembly, homodimer.

It localises to the cytoplasm. It catalyses the reaction tRNA(Tyr) + L-tyrosine + ATP = L-tyrosyl-tRNA(Tyr) + AMP + diphosphate + H(+). Functionally, catalyzes the attachment of tyrosine to tRNA(Tyr) in a two-step reaction: tyrosine is first activated by ATP to form Tyr-AMP and then transferred to the acceptor end of tRNA(Tyr). The chain is Tyrosine--tRNA ligase from Streptococcus pyogenes serotype M28 (strain MGAS6180).